A 1165-amino-acid chain; its full sequence is DNA-directed RNA polymerase III subunit RPC2 (1165 aa).

The interval 1–21 (MGVNTAGDPQKSQPKINKGGI) is disordered. Zn(2+)-binding residues include cysteine 1111, cysteine 1114, cysteine 1123, and cysteine 1126. Residues 1111–1126 (CGQCGLLGYKGWCNSC) form a C4-type zinc finger.

Belongs to the RNA polymerase beta chain family. In terms of assembly, component of the RNA polymerase III (Pol III) complex consisting of 17 subunits.

It localises to the nucleus. It carries out the reaction RNA(n) + a ribonucleoside 5'-triphosphate = RNA(n+1) + diphosphate. Functionally, DNA-dependent RNA polymerase catalyzes the transcription of DNA into RNA using the four ribonucleoside triphosphates as substrates. Second largest core component of RNA polymerase III which synthesizes small RNAs, such as 5S rRNA and tRNAs. Proposed to contribute to the polymerase catalytic activity and forms the polymerase active center together with the largest subunit. Pol III is composed of mobile elements and RPC2 is part of the core element with the central large cleft and probably a clamp element that moves to open and close the cleft. This Schizosaccharomyces pombe (strain 972 / ATCC 24843) (Fission yeast) protein is DNA-directed RNA polymerase III subunit RPC2 (rpc2).